The chain runs to 337 residues: MENLKALTEQALAEVAKTEDLAGLDAIRVNYLGKKGEITAQLKNLGGLSPEERPAAGAKINEAKQLVQNHISERKAALEAQAISAKLAAESIDVTLAGRQPEVGGLHPVTRTLRRISEIFTAVGYDVAEGPEIEDDFHNFEALNIPGHHPARAMHDTFYISPSHVLRTHTSPVQVRTMKSQEPPIKVICPGRVYRCDSDLTHTPMFHQVEGLVVDKNVSFADLKGTVDQFLKSFFEADVPVRFRPSYFPFTEPSAEVDIQCTNCGGEGCRICKQTGWLEIMGCGMVHPKVFESCGVDAEEYTGLAFGIGVERLAMLRYGVNDLRLFFENDLDFLNQF.

A Mg(2+)-binding site is contributed by E252.

Belongs to the class-II aminoacyl-tRNA synthetase family. Phe-tRNA synthetase alpha subunit type 1 subfamily. Tetramer of two alpha and two beta subunits. Mg(2+) is required as a cofactor.

It localises to the cytoplasm. The catalysed reaction is tRNA(Phe) + L-phenylalanine + ATP = L-phenylalanyl-tRNA(Phe) + AMP + diphosphate + H(+). This Saccharophagus degradans (strain 2-40 / ATCC 43961 / DSM 17024) protein is Phenylalanine--tRNA ligase alpha subunit.